Here is a 141-residue protein sequence, read N- to C-terminus: Hemoglobin subunit alpha-1/2 (141 aa).

Residues 1–141 (VLSPADKTNV…VSTVLTSKYR (141 aa)) form the Globin domain. Ser3 carries the post-translational modification Phosphoserine. The residue at position 7 (Lys7) is an N6-succinyllysine. Thr8 bears the Phosphothreonine mark. Lys11 bears the N6-succinyllysine mark. Lys16 is subject to N6-acetyllysine; alternate. An N6-succinyllysine; alternate modification is found at Lys16. A Phosphotyrosine modification is found at Tyr24. Phosphoserine is present on Ser35. Lys40 carries the N6-succinyllysine modification. At Ser49 the chain carries Phosphoserine. His58 lines the O2 pocket. Position 87 (His87) interacts with heme b. At Ser102 the chain carries Phosphoserine. Phosphothreonine is present on Thr108. Ser124 is modified (phosphoserine). Phosphothreonine is present on residues Thr134 and Thr137. Residue Ser138 is modified to Phosphoserine.

The protein belongs to the globin family. As to quaternary structure, heterotetramer of two alpha chains and two beta chains. As to expression, red blood cells.

Functionally, involved in oxygen transport from the lung to the various peripheral tissues. This is Hemoglobin subunit alpha-1/2 from Mustela putorius (European polecat).